The chain runs to 449 residues: Tubulin alpha chain (449 aa).

8 residues coordinate GTP: Gln-11, Glu-71, Ser-140, Gly-144, Thr-145, Thr-179, Asn-206, and Asn-228. Mg(2+) is bound at residue Glu-71. Residue Glu-254 is part of the active site.

This sequence belongs to the tubulin family. Dimer of alpha and beta chains. A typical microtubule is a hollow water-filled tube with an outer diameter of 25 nm and an inner diameter of 15 nM. Alpha-beta heterodimers associate head-to-tail to form protofilaments running lengthwise along the microtubule wall with the beta-tubulin subunit facing the microtubule plus end conferring a structural polarity. Microtubules usually have 13 protofilaments but different protofilament numbers can be found in some organisms and specialized cells. Mg(2+) is required as a cofactor.

It is found in the cytoplasm. Its subcellular location is the cytoskeleton. The enzyme catalyses GTP + H2O = GDP + phosphate + H(+). Tubulin is the major constituent of microtubules, a cylinder consisting of laterally associated linear protofilaments composed of alpha- and beta-tubulin heterodimers. Microtubules grow by the addition of GTP-tubulin dimers to the microtubule end, where a stabilizing cap forms. Below the cap, tubulin dimers are in GDP-bound state, owing to GTPase activity of alpha-tubulin. This Gibberella zeae (strain ATCC MYA-4620 / CBS 123657 / FGSC 9075 / NRRL 31084 / PH-1) (Wheat head blight fungus) protein is Tubulin alpha chain (TUB1).